The primary structure comprises 318 residues: O-glucosyltransferase LpsA (318 aa).

This sequence belongs to the glycosyltransferase 90 family.

Its pathway is protein modification; protein glycosylation. In terms of biological role, involved in lipopolysaccharide core biosynthesis. This chain is O-glucosyltransferase LpsA (lpsA), found in Dichelobacter nodosus (Bacteroides nodosus).